The following is a 508-amino-acid chain: Glycerol kinase (508 aa).

Position 14 (threonine 14) interacts with ADP. The ATP site is built by threonine 14, threonine 15, and serine 16. Threonine 14 lines the sn-glycerol 3-phosphate pocket. An ADP-binding site is contributed by arginine 18. Sn-glycerol 3-phosphate contacts are provided by arginine 84, glutamate 85, and tyrosine 136. Arginine 84, glutamate 85, and tyrosine 136 together coordinate glycerol. Histidine 232 is subject to Phosphohistidine; by HPr. Aspartate 246 provides a ligand contact to sn-glycerol 3-phosphate. Aspartate 246 and glutamine 247 together coordinate glycerol. ADP is bound by residues threonine 268 and glycine 311. Threonine 268, glycine 311, glutamine 315, and glycine 412 together coordinate ATP. Residues glycine 412 and asparagine 416 each contribute to the ADP site.

Belongs to the FGGY kinase family. As to quaternary structure, homotetramer and homodimer (in equilibrium). The phosphoenolpyruvate-dependent sugar phosphotransferase system (PTS), including enzyme I, and histidine-containing protein (HPr) are required for the phosphorylation, which leads to the activation of the enzyme.

The enzyme catalyses glycerol + ATP = sn-glycerol 3-phosphate + ADP + H(+). Its pathway is polyol metabolism; glycerol degradation via glycerol kinase pathway; sn-glycerol 3-phosphate from glycerol: step 1/1. With respect to regulation, activated by phosphorylation and inhibited by fructose 1,6-bisphosphate (FBP). Functionally, key enzyme in the regulation of glycerol uptake and metabolism. Catalyzes the phosphorylation of glycerol to yield sn-glycerol 3-phosphate. The protein is Glycerol kinase of Streptococcus pyogenes serotype M28 (strain MGAS6180).